We begin with the raw amino-acid sequence, 339 residues long: Alpha-N-dichloroacetyl-p-aminophenylserinol N-oxygenase (339 aa).

Over residues 1–19 (MRDHTDEKSEAAGNDDGHV) the composition is skewed to basic and acidic residues. Residues 1 to 22 (MRDHTDEKSEAAGNDDGHVRIG) form a disordered region. Fe cation is bound by residues E109, E144, H147, E205, H232, E236, and H239.

The protein belongs to the AurF N-oxygenase family. The cofactor is Fe(2+).

It catalyses the reaction alpha-N-dichloroacetyl-p-aminophenylserinol + AH2 + 2 O2 = chloramphenicol + A + 2 H2O. It functions in the pathway antibiotic biosynthesis. Involved in chloramphenicol biosynthesis. Catalyzes the six-electron oxidation of an aryl-amine precursor of chloramphenicol (NH2-CAM) to yield the aryl-nitro group of chloramphenicol (CAM). During catalysis, upon exposure of the diferrous cluster to O(2), ClmI forms an exceptionally long-lived peroxo intermediate (CmlI-peroxo), which reacts with NH2-CAM to form CAM. This is Alpha-N-dichloroacetyl-p-aminophenylserinol N-oxygenase from Streptomyces venezuelae (strain ATCC 10712 / CBS 650.69 / DSM 40230 / JCM 4526 / NBRC 13096 / PD 04745).